The primary structure comprises 232 residues: Dehydrogenase OXI1 (232 aa).

A signal peptide spans 1–20; that stretch reads MTETFKVAITFVSPSSEALA. Position 19 (Leu-19) interacts with NADP(+). A glycan (N-linked (GlcNAc...) asparagine) is linked at Asn-28. NADP(+) contacts are provided by Asp-42, Asn-70, and Lys-103. An N-linked (GlcNAc...) asparagine glycan is attached at Asn-117. Active-site proton donor residues include Ser-119 and Ser-121. The NADP(+) site is built by Tyr-133, Lys-137, and Thr-168. Residue Tyr-133 is the Proton acceptor of the active site. Lys-137 acts as the Lowers pKa of active site Tyr in catalysis.

Belongs to the short-chain dehydrogenases/reductases (SDR) family.

It carries out the reaction a primary alcohol + NAD(+) = an aldehyde + NADH + H(+). The catalysed reaction is a secondary alcohol + NAD(+) = a ketone + NADH + H(+). It functions in the pathway mycotoxin biosynthesis. Its function is as follows. Dehydrogenase; part of the Tox1A locus, one of the 2 loci that mediate the biosynthesis of T-toxin, a family of linear polyketides 37 to 45 carbons in length, of which the major component is 41 carbons, and which leads to high virulence to maize. One of the PKSs (PKS1 or PKS2) could synthesize a precursor, used subsequently by the other PKS as starter unit, to add additional carbons. Variability in the length of the final carbon backbone C35-47 could be achieved by varying the number of condensation cycles, or use of different starter or extender units or might be due to decarboxylation of the penultimate product, catalyzed by DEC1. Additional proteins are required for the biosynthesis of T-toxin, including oxidoreductases RED1, RED2, RED3, LAM1 and OXI1, as well as esterase TOX9. In Cochliobolus heterostrophus (strain C4 / ATCC 48331 / race T) (Southern corn leaf blight fungus), this protein is Dehydrogenase OXI1.